We begin with the raw amino-acid sequence, 180 residues long: Large ribosomal subunit protein uL5 (180 aa).

This sequence belongs to the universal ribosomal protein uL5 family. As to quaternary structure, part of the 50S ribosomal subunit; part of the 5S rRNA/L5/L18/L25 subcomplex. Contacts the 5S rRNA and the P site tRNA. Forms a bridge to the 30S subunit in the 70S ribosome.

This is one of the proteins that bind and probably mediate the attachment of the 5S RNA into the large ribosomal subunit, where it forms part of the central protuberance. In the 70S ribosome it contacts protein S13 of the 30S subunit (bridge B1b), connecting the 2 subunits; this bridge is implicated in subunit movement. Contacts the P site tRNA; the 5S rRNA and some of its associated proteins might help stabilize positioning of ribosome-bound tRNAs. This Brevibacillus brevis (strain 47 / JCM 6285 / NBRC 100599) protein is Large ribosomal subunit protein uL5.